The primary structure comprises 425 residues: Nuclear pore complex-interacting protein family member B6 (425 aa).

Positions 332–414 (SPLPPSVDDN…RRLSKLRTRH (83 aa)) are disordered. Residues 353–395 (EVEKPPKPKRWRVDEVEQSPKPKRRRVDEVEQSPKPKRQREAE) are compositionally biased toward basic and acidic residues. The span at 401-414 (KPKRRRLSKLRTRH) shows a compositional bias: basic residues.

It belongs to the NPIP family.

The chain is Nuclear pore complex-interacting protein family member B6 (NPIPB6) from Homo sapiens (Human).